A 341-amino-acid polypeptide reads, in one-letter code: GTP-binding protein REM 2 (341 aa).

Over residues 1 to 13 the composition is skewed to acidic residues; that stretch reads MHTDLDTDMDMDT. Disordered regions lie at residues 1 to 71 and 84 to 106; these read MHTD…GSMP and VDEL…GSGE. The segment covering 18–30 has biased composition (polar residues); the sequence is LCSSSSRQASPLG. S27 carries the post-translational modification Phosphoserine. Low complexity predominate over residues 90 to 106; it reads PPQASPSGSSDSLGSGE. Residues 122–129, 230–233, and 261–262 contribute to the GTP site; these read GESGVGKS, NKSD, and AA. Residues 282–309 are disordered; the sequence is RGRGHAGGQRPEPSSPDGPAPPTRRESL. The span at 294-303 shows a compositional bias: pro residues; it reads PSSPDGPAPP. Position 296 is a phosphoserine (S296).

Belongs to the small GTPase superfamily. RGK family.

The protein localises to the cell membrane. In terms of biological role, binds GTP saturably and exhibits a low intrinsic rate of GTP hydrolysis. The chain is GTP-binding protein REM 2 (Rem2) from Mus musculus (Mouse).